The following is a 177-amino-acid chain: Large ribosomal subunit protein uL6 (177 aa).

Belongs to the universal ribosomal protein uL6 family. As to quaternary structure, part of the 50S ribosomal subunit.

Its function is as follows. This protein binds to the 23S rRNA, and is important in its secondary structure. It is located near the subunit interface in the base of the L7/L12 stalk, and near the tRNA binding site of the peptidyltransferase center. The polypeptide is Large ribosomal subunit protein uL6 (Rubrobacter xylanophilus (strain DSM 9941 / JCM 11954 / NBRC 16129 / PRD-1)).